Here is a 294-residue protein sequence, read N- to C-terminus: Phosphatidylserine decarboxylase proenzyme (294 aa).

Residues aspartate 113, histidine 169, and serine 256 each act as charge relay system; for autoendoproteolytic cleavage activity in the active site. Catalysis depends on serine 256, which acts as the Schiff-base intermediate with substrate; via pyruvic acid; for decarboxylase activity. Serine 256 is subject to Pyruvic acid (Ser); by autocatalysis.

Belongs to the phosphatidylserine decarboxylase family. PSD-B subfamily. Prokaryotic type II sub-subfamily. As to quaternary structure, heterodimer of a large membrane-associated beta subunit and a small pyruvoyl-containing alpha subunit. The cofactor is pyruvate. In terms of processing, is synthesized initially as an inactive proenzyme. Formation of the active enzyme involves a self-maturation process in which the active site pyruvoyl group is generated from an internal serine residue via an autocatalytic post-translational modification. Two non-identical subunits are generated from the proenzyme in this reaction, and the pyruvate is formed at the N-terminus of the alpha chain, which is derived from the carboxyl end of the proenzyme. The autoendoproteolytic cleavage occurs by a canonical serine protease mechanism, in which the side chain hydroxyl group of the serine supplies its oxygen atom to form the C-terminus of the beta chain, while the remainder of the serine residue undergoes an oxidative deamination to produce ammonia and the pyruvoyl prosthetic group on the alpha chain. During this reaction, the Ser that is part of the protease active site of the proenzyme becomes the pyruvoyl prosthetic group, which constitutes an essential element of the active site of the mature decarboxylase.

Its subcellular location is the cell membrane. It carries out the reaction a 1,2-diacyl-sn-glycero-3-phospho-L-serine + H(+) = a 1,2-diacyl-sn-glycero-3-phosphoethanolamine + CO2. It functions in the pathway phospholipid metabolism; phosphatidylethanolamine biosynthesis; phosphatidylethanolamine from CDP-diacylglycerol: step 2/2. Functionally, catalyzes the formation of phosphatidylethanolamine (PtdEtn) from phosphatidylserine (PtdSer). The protein is Phosphatidylserine decarboxylase proenzyme of Clostridium perfringens (strain SM101 / Type A).